The chain runs to 211 residues: C-type lectin domain family 2 member L (211 aa).

The disordered stretch occupies residues 1 to 53 (MEPAREPPARARPPPPAARPAPAAPRPRSPAEAEARGPEGLLRRSGSGYEGST). Over residues 10-28 (RARPPPPAARPAPAAPRPR) the composition is skewed to pro residues. S29 carries the post-translational modification Phosphoserine. The chain crosses the membrane as a helical span at residues 66–86 (LLLGAIAVLLFAILVVMSILA). One can recognise a C-type lectin domain in the interval 104-206 (YGRKCYYFSE…CLTTRPWVCS (103 aa)). Intrachain disulfides connect C125–C205 and C184–C197.

It localises to the membrane. This is C-type lectin domain family 2 member L (Clec2l) from Mus musculus (Mouse).